Reading from the N-terminus, the 117-residue chain is Toxin CSTX-12 (117 aa).

Residues 1–20 (MKVLVICAVLFLTIFSNSSA) form the signal peptide. A propeptide spanning residues 21–47 (ETEDDFLEDESFEADDVIPFLAREQVR) is cleaved from the precursor. 4 disulfide bridges follow: Cys50/Cys65, Cys57/Cys74, Cys64/Cys95, and Cys76/Cys93. Residues 82–87 (RSDTAR) constitute a propeptide that is removed on maturation. Position 116 is an alanine amide (Ala116).

The protein belongs to the neurotoxin 19 (CSTX) family. 12 subfamily. As to quaternary structure, heterodimer of A and B chains; disulfide-linked. Interacts with CSTX-1 (AC P81694), and with CSTX-9 (AC P58604). In terms of tissue distribution, expressed by the venom gland.

The protein resides in the secreted. Its subcellular location is the target cell membrane. Synergistic toxin that induces or increases a cytolytic effect when combined with CSTX-1 (AC P81694) or CSTX-9 (AC P58604). When alone, has a weak insecticidal activity, with an unknown molecular target. In Cupiennius salei (American wandering spider), this protein is Toxin CSTX-12.